The sequence spans 872 residues: Alanine--tRNA ligase (872 aa).

Positions 563, 567, 665, and 669 each coordinate Zn(2+).

It belongs to the class-II aminoacyl-tRNA synthetase family. The cofactor is Zn(2+).

The protein resides in the cytoplasm. The enzyme catalyses tRNA(Ala) + L-alanine + ATP = L-alanyl-tRNA(Ala) + AMP + diphosphate. In terms of biological role, catalyzes the attachment of alanine to tRNA(Ala) in a two-step reaction: alanine is first activated by ATP to form Ala-AMP and then transferred to the acceptor end of tRNA(Ala). Also edits incorrectly charged Ser-tRNA(Ala) and Gly-tRNA(Ala) via its editing domain. This chain is Alanine--tRNA ligase, found in Bacteroides fragilis (strain YCH46).